Consider the following 179-residue polypeptide: Large ribosomal subunit protein uL5 (179 aa).

It belongs to the universal ribosomal protein uL5 family. Part of the 50S ribosomal subunit; part of the 5S rRNA/L5/L18/L25 subcomplex. Contacts the 5S rRNA and the P site tRNA. Forms a bridge to the 30S subunit in the 70S ribosome.

Its function is as follows. This is one of the proteins that bind and probably mediate the attachment of the 5S RNA into the large ribosomal subunit, where it forms part of the central protuberance. In the 70S ribosome it contacts protein S13 of the 30S subunit (bridge B1b), connecting the 2 subunits; this bridge is implicated in subunit movement. Contacts the P site tRNA; the 5S rRNA and some of its associated proteins might help stabilize positioning of ribosome-bound tRNAs. The protein is Large ribosomal subunit protein uL5 of Vesicomyosocius okutanii subsp. Calyptogena okutanii (strain HA).